The sequence spans 120 residues: Aspartate 1-decarboxylase (120 aa).

Ser-25 acts as the Schiff-base intermediate with substrate; via pyruvic acid in catalysis. Ser-25 carries the post-translational modification Pyruvic acid (Ser). Position 57 (Thr-57) interacts with substrate. The active-site Proton donor is Tyr-58. 73 to 75 (GAA) contributes to the substrate binding site.

It belongs to the PanD family. As to quaternary structure, heterooctamer of four alpha and four beta subunits. Pyruvate is required as a cofactor. In terms of processing, is synthesized initially as an inactive proenzyme, which is activated by self-cleavage at a specific serine bond to produce a beta-subunit with a hydroxyl group at its C-terminus and an alpha-subunit with a pyruvoyl group at its N-terminus.

The protein resides in the cytoplasm. The catalysed reaction is L-aspartate + H(+) = beta-alanine + CO2. It participates in cofactor biosynthesis; (R)-pantothenate biosynthesis; beta-alanine from L-aspartate: step 1/1. In terms of biological role, catalyzes the pyruvoyl-dependent decarboxylation of aspartate to produce beta-alanine. This is Aspartate 1-decarboxylase from Deinococcus geothermalis (strain DSM 11300 / CIP 105573 / AG-3a).